Consider the following 601-residue polypeptide: Glutamyl-tRNA(Gln) amidotransferase subunit B, mitochondrial (601 aa).

The N-terminal 52 residues, 1 to 52 (MLQQWLRQSPRAARVLRGSCCRGPQSGSLRHSPLPTAPHRCIRSLQTSATES), are a transit peptide targeting the mitochondrion.

This sequence belongs to the GatB/GatE family. GatB subfamily. In terms of assembly, subunit of the heterotrimeric GatCAB amidotransferase (AdT) complex, composed of A, B and C subunits.

It is found in the mitochondrion. It catalyses the reaction L-glutamyl-tRNA(Gln) + L-glutamine + ATP + H2O = L-glutaminyl-tRNA(Gln) + L-glutamate + ADP + phosphate + H(+). Allows the formation of correctly charged Gln-tRNA(Gln) through the transamidation of misacylated Glu-tRNA(Gln) in the mitochondria. The reaction takes place in the presence of glutamine and ATP through an activated gamma-phospho-Glu-tRNA(Gln). This is Glutamyl-tRNA(Gln) amidotransferase subunit B, mitochondrial from Aspergillus fumigatus (strain ATCC MYA-4609 / CBS 101355 / FGSC A1100 / Af293) (Neosartorya fumigata).